The primary structure comprises 179 residues: MSRIGKRPITIPNKVTVNIDGSHVAVKGPKGELQRTLPTLVIVEQDEGVLRVVRQDDSRTARQRHGLCRTLVSNMVEGVSKGFEKRLEIQGVGYRAAAQGSKLTLNVGYSKPVEMDMPSGIGVAVEKNTEITITGIDKEIVGNVAAKIRAVRPPEPYKGKGIRYKGEVVRRKAGKTGKK.

Belongs to the universal ribosomal protein uL6 family. In terms of assembly, part of the 50S ribosomal subunit.

This protein binds to the 23S rRNA, and is important in its secondary structure. It is located near the subunit interface in the base of the L7/L12 stalk, and near the tRNA binding site of the peptidyltransferase center. This chain is Large ribosomal subunit protein uL6, found in Gloeothece citriformis (strain PCC 7424) (Cyanothece sp. (strain PCC 7424)).